The following is a 653-amino-acid chain: ATP-dependent zinc metalloprotease FtsH 1 (653 aa).

Over 1-8 (MAENKWLR) the chain is Cytoplasmic. A helical membrane pass occupies residues 9–29 (NGFVWIVLIIAVVALWVTFMK). Residues 30-110 (DGGSAREENF…RVNPASQWGN (81 aa)) lie on the Extracellular side of the membrane. Residues 111–131 (WLSALTFILPTLFLIGIVIFM) form a helical membrane-spanning segment. Residues 132-653 (MRQAQGTNNQ…SPTMRPQPAS (522 aa)) are Cytoplasmic-facing. Position 203–210 (203–210 (GPPGTGKT)) interacts with ATP. His425 provides a ligand contact to Zn(2+). The active site involves Glu426. 2 residues coordinate Zn(2+): His429 and Asp501. Residues 604-653 (EPRPRPQLVGPPVTRPAALAHKTEEADRGGERSPHPQPHPSPTMRPQPAS) form a disordered region. The segment covering 624–637 (HKTEEADRGGERSP) has biased composition (basic and acidic residues). Residues 638-653 (HPQPHPSPTMRPQPAS) are compositionally biased toward pro residues.

This sequence in the central section; belongs to the AAA ATPase family. In the C-terminal section; belongs to the peptidase M41 family. Homohexamer. The cofactor is Zn(2+).

It is found in the cell membrane. Functionally, acts as a processive, ATP-dependent zinc metallopeptidase for both cytoplasmic and membrane proteins. Plays a role in the quality control of integral membrane proteins. In Sphaerobacter thermophilus (strain ATCC 49802 / DSM 20745 / KCCM 41009 / NCIMB 13125 / S 6022), this protein is ATP-dependent zinc metalloprotease FtsH 1.